Here is a 207-residue protein sequence, read N- to C-terminus: Probable isochorismatase (207 aa).

Belongs to the isochorismatase family.

The enzyme catalyses isochorismate + H2O = (2S,3S)-2,3-dihydroxy-2,3-dihydrobenzoate + pyruvate. It participates in antibiotic biosynthesis; phenazine biosynthesis. Functionally, involved in the biosynthesis of the antibiotic phenazine, a nitrogen-containing heterocyclic molecule having important roles in virulence, competition and biological control. This isochorismatase may remove pyruvate from chorismate during the formation of the phenazine ring structure and/or stabilize the phenazine biosynthetic complex. This is Probable isochorismatase (phzA) from Pseudomonas chlororaphis (Pseudomonas aureofaciens).